Reading from the N-terminus, the 201-residue chain is Recombination protein RecR (201 aa).

The C4-type zinc-finger motif lies at 57 to 72 (CRDCRTFTEQEVCTIC). The Toprim domain maps to 81 to 176 (GQICVVESPA…LASRIAHGVP (96 aa)).

The protein belongs to the RecR family.

In terms of biological role, may play a role in DNA repair. It seems to be involved in an RecBC-independent recombinational process of DNA repair. It may act with RecF and RecO. This chain is Recombination protein RecR, found in Edwardsiella ictaluri (strain 93-146).